The chain runs to 999 residues: Bifunctional glutamine synthetase adenylyltransferase/adenylyl-removing enzyme (999 aa).

The interval 1–493 (MFVRKPATER…LHAKLFYQPL (493 aa)) is adenylyl removase. Residues 498–999 (GHTALGIGEG…KAVVRKIFGG (502 aa)) form an adenylyl transferase region.

The protein belongs to the GlnE family. The cofactor is Mg(2+).

The enzyme catalyses [glutamine synthetase]-O(4)-(5'-adenylyl)-L-tyrosine + phosphate = [glutamine synthetase]-L-tyrosine + ADP. It catalyses the reaction [glutamine synthetase]-L-tyrosine + ATP = [glutamine synthetase]-O(4)-(5'-adenylyl)-L-tyrosine + diphosphate. Involved in the regulation of glutamine synthetase GlnA, a key enzyme in the process to assimilate ammonia. When cellular nitrogen levels are high, the C-terminal adenylyl transferase (AT) inactivates GlnA by covalent transfer of an adenylyl group from ATP to specific tyrosine residue of GlnA, thus reducing its activity. Conversely, when nitrogen levels are low, the N-terminal adenylyl removase (AR) activates GlnA by removing the adenylyl group by phosphorolysis, increasing its activity. The regulatory region of GlnE binds the signal transduction protein PII (GlnB) which indicates the nitrogen status of the cell. This chain is Bifunctional glutamine synthetase adenylyltransferase/adenylyl-removing enzyme, found in Mycolicibacterium smegmatis (strain ATCC 700084 / mc(2)155) (Mycobacterium smegmatis).